We begin with the raw amino-acid sequence, 139 residues long: Putative general secretion pathway protein B (139 aa).

A helical membrane pass occupies residues 28 to 48 (IIYVICLLLICLWFAGMVLVG). Residues 93-139 (VEEEDDPGVAVENAPSSSEDEENTVEESEEKAGLRERVKNALNELER) are disordered. Over residues 110–121 (SEDEENTVEESE) the composition is skewed to acidic residues. The segment covering 122–139 (EKAGLRERVKNALNELER) has biased composition (basic and acidic residues).

The protein localises to the cell membrane. In terms of biological role, part of a cryptic operon that encodes proteins involved in type II secretion pathway in other organisms, but is not expressed in strain K12 under standard laboratory conditions. May play a regulatory role under conditions of derepressed gsp gene expression. In Escherichia coli (strain K12), this protein is Putative general secretion pathway protein B.